The primary structure comprises 70 residues: U-scoloptoxin(04)-Er3a (70 aa).

The N-terminal stretch at 1–24 (MAAIRNLLILTMLLIVCVSWNADA) is a signal peptide.

This sequence belongs to the scoloptoxin-04 family. Post-translationally, contains 2 disulfide bonds. As to expression, expressed by the venom gland.

The protein localises to the secreted. This is U-scoloptoxin(04)-Er3a from Ethmostigmus rubripes (Giant centipede).